Reading from the N-terminus, the 86-residue chain is BolA-like protein 2 (86 aa).

Residue Met1 is modified to N-acetylmethionine.

Belongs to the BolA/IbaG family. As to quaternary structure, interacts with GLRX3; forms a heterotrimeric complex composed by two BOLA2 molecules and one GLRX3 molecule; linked by [2Fe-2S] clusters.

It is found in the cytoplasm. Its subcellular location is the nucleus. Functionally, acts as a cytosolic iron-sulfur (Fe-S) cluster assembly factor that facilitates [2Fe-2S] cluster insertion into a subset of cytosolic proteins. Acts together with the monothiol glutaredoxin GLRX3. The protein is BolA-like protein 2 (Bola2) of Mus musculus (Mouse).